A 900-amino-acid polypeptide reads, in one-letter code: MTEIMTPAMRQYYEAKQAYPDTLIFFRMGDFYESFGEDAKTIAKELEITLTARGKDRTGERMPLAGIPYHAIDTYLPRLINKGYKVAICEQLEDPKKAKGVVKRGVVRVVTPGTAIDSSMFSDASNNYLMAVAGREGGKSGKNGEKEMEFGISFLDISTGEFLTTQFTDSENFDKLLSELARMHPAECILPPSLYGNSELTGKLREHTIVQEFAPEVFGTEEAGEKLKTHFGVATLEGMGCQKLEFAVYSAWAALEYAKTTQMRDLTHINTLRTYSNTEFMILDSITLRNLEIVKNVRDEGDENSLYRTLNCTRTPMGNRTLKKWLLKPLLSVEKINPRLDAIEELAEDSLLRYDIRDWLSDVRDIERLVGRIVYGNASARDLVALKKSLGVVPSLRDSLLEKARFEMLKEIAEGLASFSELEELAEMIEIAIMDEPPVSVREGGMIKSGYSPELDELRDISSNSKQWIAAFQQKERERSGIKSLKVGYNKVFGYYIEVTHANSSQVPEDYIRKQTMANAERFFTPELKEKESLILTANEKAVALEYEIFAEITRTLSARSRELQETAERIGTLDVLASLAEATENNNYTRPQLTEDCKILIRDGRHPVVESTVSGGFVPNDTEMDCKENQFLLVTGPNMAGKSTYMRQTALIAIMAQVGSFVPASYASVGIIDQVFTRIGAFDDLASGQSTFMVEMVELANILNNASPKSLVLLDEIGRGTSTYDGYSIAKAVVEFLHNRGKVGIRALFATHYHQLTALEEKLKRVKNYHIAVKEDGHELVFLRKIVPGATDRSYGIHVARLAGVPEKVIERANEILKELERENVLEEAEDGENGKKKKSKATARYTQMLLFDPGSGSRSSEKAKGLSPVEAALKKVNPDEMTPIEALNKLHELKKLLG.

Position 637–644 (637–644) interacts with ATP; that stretch reads GPNMAGKS.

It belongs to the DNA mismatch repair MutS family.

Functionally, this protein is involved in the repair of mismatches in DNA. It is possible that it carries out the mismatch recognition step. This protein has a weak ATPase activity. The chain is DNA mismatch repair protein MutS from Methanosarcina acetivorans (strain ATCC 35395 / DSM 2834 / JCM 12185 / C2A).